Consider the following 61-residue polypeptide: Small ribosomal subunit protein eS30A (61 aa).

Positions 1-36 are disordered; that stretch reads MGKVHGSLARAGKVKSQTPKVEKQEKPKQPKGRAYK.

The protein belongs to the eukaryotic ribosomal protein eS30 family. Component of the small ribosomal subunit (SSU). Mature yeast ribosomes consist of a small (40S) and a large (60S) subunit. The 40S small subunit contains 1 molecule of ribosomal RNA (18S rRNA) and at least 33 different proteins. The large 60S subunit contains 3 rRNA molecules (25S, 5.8S and 5S rRNA) and at least 46 different proteins.

The protein resides in the cytoplasm. It localises to the nucleus. Its function is as follows. Component of the ribosome, a large ribonucleoprotein complex responsible for the synthesis of proteins in the cell. The small ribosomal subunit (SSU) binds messenger RNAs (mRNAs) and translates the encoded message by selecting cognate aminoacyl-transfer RNA (tRNA) molecules. The large subunit (LSU) contains the ribosomal catalytic site termed the peptidyl transferase center (PTC), which catalyzes the formation of peptide bonds, thereby polymerizing the amino acids delivered by tRNAs into a polypeptide chain. The nascent polypeptides leave the ribosome through a tunnel in the LSU and interact with protein factors that function in enzymatic processing, targeting, and the membrane insertion of nascent chains at the exit of the ribosomal tunnel. The polypeptide is Small ribosomal subunit protein eS30A (rps3001) (Schizosaccharomyces pombe (strain 972 / ATCC 24843) (Fission yeast)).